Reading from the N-terminus, the 385-residue chain is Hsp70/Hsp90 co-chaperone CNS1 (385 aa).

The segment at 1–37 (MSSVNANGGYTKPQKYVPGPGDPELPPQLSEFKDKTS) is disordered. TPR repeat units follow at residues 83–116 (AENF…ECED), 121–154 (ESLY…NPKN), and 155–189 (VKCY…DPEN).

The protein belongs to the TTC4 family. Monomer. Component of Hsp70 and Hsp90 chaperone complexes. Interacts (via TPR repeats) with HSC82 and HSP82 (via C-terminal MEEVD pentapeptide). Interacts with CPR7, SSA1 and SPI1.

Its subcellular location is the cytoplasm. Co-chaperone that binds to the molecular chaperones Hsp90 (HSC82 and HSP82) and Hsp70 (SSA1). Stimulates SSA1 ATPase activity, but not Hsp90 ATPase activity. Involved in only a subset of Hsp90 functions. In Saccharomyces cerevisiae (strain ATCC 204508 / S288c) (Baker's yeast), this protein is Hsp70/Hsp90 co-chaperone CNS1 (CNS1).